Consider the following 471-residue polypeptide: 3-isopropylmalate dehydratase large subunit (471 aa).

3 residues coordinate [4Fe-4S] cluster: C351, C412, and C415.

This sequence belongs to the aconitase/IPM isomerase family. LeuC type 1 subfamily. Heterodimer of LeuC and LeuD. The cofactor is [4Fe-4S] cluster.

The enzyme catalyses (2R,3S)-3-isopropylmalate = (2S)-2-isopropylmalate. The protein operates within amino-acid biosynthesis; L-leucine biosynthesis; L-leucine from 3-methyl-2-oxobutanoate: step 2/4. Functionally, catalyzes the isomerization between 2-isopropylmalate and 3-isopropylmalate, via the formation of 2-isopropylmaleate. This chain is 3-isopropylmalate dehydratase large subunit, found in Hahella chejuensis (strain KCTC 2396).